A 138-amino-acid polypeptide reads, in one-letter code: High mobility group B protein 4 (138 aa).

2 disordered regions span residues Met1–Ala41 and Leu105–Asp138. The span at Lys18–Lys29 shows a compositional bias: basic residues. Residues Pro35–Asn104 constitute a DNA-binding region (HMG box). A phosphoserine mark is found at Ser123 and Ser130. The segment covering Asp126–Asp138 has biased composition (acidic residues).

This sequence belongs to the HMGB family. In terms of tissue distribution, mostly expressed roots and flowers, and, to a lower extent, in stems and leaves.

It localises to the nucleus. The protein localises to the cytoplasm. Its subcellular location is the cytosol. Binds preferentially double-stranded DNA. The chain is High mobility group B protein 4 (HMGB4) from Arabidopsis thaliana (Mouse-ear cress).